The sequence spans 614 residues: Threonine--tRNA ligase (614 aa).

Positions 1-141 are editing domain; the sequence is MRLLLIHSDY…LSKTIVPGEE (141 aa). The segment at 198 to 490 is catalytic; sequence AHVDLMRSKE…ISTQKVPALP (293 aa). The Zn(2+) site is built by Cys-290, His-342, and His-463.

It belongs to the class-II aminoacyl-tRNA synthetase family. In terms of assembly, homodimer. Zn(2+) is required as a cofactor.

Its subcellular location is the cytoplasm. The enzyme catalyses tRNA(Thr) + L-threonine + ATP = L-threonyl-tRNA(Thr) + AMP + diphosphate + H(+). In terms of biological role, catalyzes the attachment of threonine to tRNA(Thr) in a two-step reaction: L-threonine is first activated by ATP to form Thr-AMP and then transferred to the acceptor end of tRNA(Thr). Also edits incorrectly charged L-seryl-tRNA(Thr). This is Threonine--tRNA ligase from Methanoregula boonei (strain DSM 21154 / JCM 14090 / 6A8).